Here is a 101-residue protein sequence, read N- to C-terminus: Small ribosomal subunit protein uS14 (101 aa).

This sequence belongs to the universal ribosomal protein uS14 family. Part of the 30S ribosomal subunit. Contacts proteins S3 and S10.

Its function is as follows. Binds 16S rRNA, required for the assembly of 30S particles and may also be responsible for determining the conformation of the 16S rRNA at the A site. This is Small ribosomal subunit protein uS14 from Janthinobacterium sp. (strain Marseille) (Minibacterium massiliensis).